Consider the following 359-residue polypeptide: Protein RecA (359 aa).

Position 77–84 (Gly-77–Thr-84) interacts with ATP.

It belongs to the RecA family.

It is found in the cytoplasm. Functionally, can catalyze the hydrolysis of ATP in the presence of single-stranded DNA, the ATP-dependent uptake of single-stranded DNA by duplex DNA, and the ATP-dependent hybridization of homologous single-stranded DNAs. It interacts with LexA causing its activation and leading to its autocatalytic cleavage. The chain is Protein RecA from Azospirillum lipoferum (strain 4B).